The following is a 338-amino-acid chain: Uroporphyrinogen decarboxylase (338 aa).

Residues 27 to 31 (RQAGR), aspartate 77, tyrosine 151, serine 203, and histidine 317 contribute to the substrate site.

It belongs to the uroporphyrinogen decarboxylase family. Homodimer.

The protein localises to the cytoplasm. It carries out the reaction uroporphyrinogen III + 4 H(+) = coproporphyrinogen III + 4 CO2. Its pathway is porphyrin-containing compound metabolism; protoporphyrin-IX biosynthesis; coproporphyrinogen-III from 5-aminolevulinate: step 4/4. Functionally, catalyzes the decarboxylation of four acetate groups of uroporphyrinogen-III to yield coproporphyrinogen-III. The polypeptide is Uroporphyrinogen decarboxylase (Wolbachia sp. subsp. Drosophila simulans (strain wRi)).